Consider the following 228-residue polypeptide: FtsZ-localized protein A (228 aa).

The GST N-terminal domain occupies 3-85; it reads VERTLHHFPL…HIEETETEPP (83 aa). The region spanning 90-223 is the GST C-terminal domain; the sequence is DPAERAEARR…WPGLAPAAHY (134 aa).

This sequence belongs to the GST superfamily. In terms of assembly, homodimer. Interacts with FtsZ filaments. Probably interacts with the GTPase domain of FtsZ.

It localises to the cytoplasm. Essential cell division protein that must bind to FtsZ for division to occur. Critical coordinator of envelope constriction through its interaction with FtsZ. Promotes the formation of highly curved FtsZ filaments, reduces the GTPase activity of FtsZ and stabilizes FtsZ polymers. May regulate FtsZ function by modulating its superstructure. Does not bind to glutathione. The sequence is that of FtsZ-localized protein A from Caulobacter vibrioides (strain NA1000 / CB15N) (Caulobacter crescentus).